Reading from the N-terminus, the 56-residue chain is Large ribosomal subunit protein bL32 (56 aa).

A disordered region spans residues 1–34 (MAVQQNKPSRSKRGMRRAHDALKTSTISVDKTSG).

It belongs to the bacterial ribosomal protein bL32 family.

The sequence is that of Large ribosomal subunit protein bL32 from Baumannia cicadellinicola subsp. Homalodisca coagulata.